Here is a 137-residue protein sequence, read N- to C-terminus: MFIPKKSKYKKVFKGRIKGNTKGGSTLSFGDYGLKAMEAGRIQSKHIETARRVISRTLKRSGKVWIRIFPDTPVSKKPADVRMGKGKGSVEFWVFKAKPGRMLFEISSDVPMHLARLALEKATAKLPMKCKFVSNHN.

The protein belongs to the universal ribosomal protein uL16 family. As to quaternary structure, part of the 50S ribosomal subunit.

Its function is as follows. Binds 23S rRNA and is also seen to make contacts with the A and possibly P site tRNAs. The sequence is that of Large ribosomal subunit protein uL16 from Wolbachia pipientis wMel.